The following is a 200-amino-acid chain: Dual specificity tyrosine-phosphorylation-regulated kinase 1A (200 aa).

Residue tyrosine 41 is modified to Phosphotyrosine; by autocatalysis. ATP is bound at residue lysine 58. A Phosphotyrosine; by autocatalysis modification is found at tyrosine 76. Residue serine 88 is modified to Phosphoserine; by autocatalysis. Residue threonine 122 is modified to Phosphothreonine; by autocatalysis.

It belongs to the protein kinase superfamily. CMGC Ser/Thr protein kinase family. MNB/DYRK subfamily. Interacts with RAD54L2/ARIP4. Interacts with CRY2. Interacts with RANBP9. Interacts with WDR68. Interacts with SIRT1. In terms of processing, can also autophosphorylate on serine and threonine residues (in vitro). Autophosphorylated on numerous tyrosine residues.

The protein resides in the nucleus. The enzyme catalyses L-tyrosyl-[protein] + ATP = O-phospho-L-tyrosyl-[protein] + ADP + H(+). The catalysed reaction is L-seryl-[protein] + ATP = O-phospho-L-seryl-[protein] + ADP + H(+). It carries out the reaction L-threonyl-[protein] + ATP = O-phospho-L-threonyl-[protein] + ADP + H(+). It catalyses the reaction [DNA-directed RNA polymerase] + ATP = phospho-[DNA-directed RNA polymerase] + ADP + H(+). Its activity is regulated as follows. Inhibited by RANBP9. Its function is as follows. Dual-specificity kinase which possesses both serine/threonine and tyrosine kinase activities. Exhibits a substrate preference for proline at position P+1 and arginine at position P-3. Plays an important role in double-strand breaks (DSBs) repair following DNA damage. Mechanistically, phosphorylates RNF169 and increases its ability to block accumulation of TP53BP1 at the DSB sites thereby promoting homologous recombination repair (HRR). Also acts as a positive regulator of transcription by acting as a CTD kinase that mediates phosphorylation of the CTD (C-terminal domain) of the large subunit of RNA polymerase II (RNAP II) POLR2A. May play a role in a signaling pathway regulating nuclear functions of cell proliferation. Modulates alternative splicing by phosphorylating the splice factor SRSF6. Has pro-survival function and negatively regulates the apoptotic process. Promotes cell survival upon genotoxic stress through phosphorylation of SIRT1. This in turn inhibits p53/TP53 activity and apoptosis. Phosphorylates SEPTIN4, SEPTIN5 and SF3B1 at 'Thr-434'. This Oryctolagus cuniculus (Rabbit) protein is Dual specificity tyrosine-phosphorylation-regulated kinase 1A.